The primary structure comprises 445 residues: tRNA-2-methylthio-N(6)-dimethylallyladenosine synthase (445 aa).

Residues 3-124 (KKLYIKTYGC…LPELISKVVR (122 aa)) enclose the MTTase N-terminal domain. [4Fe-4S] cluster-binding residues include cysteine 12, cysteine 48, cysteine 87, cysteine 162, cysteine 166, and cysteine 169. In terms of domain architecture, Radical SAM core spans 148 to 380 (YPQGASSFIS…QQELTAQQLA (233 aa)). The TRAM domain occupies 383–445 (ESCVGSIMKV…ASNSLTGEVI (63 aa)).

The protein belongs to the methylthiotransferase family. MiaB subfamily. In terms of assembly, monomer. Requires [4Fe-4S] cluster as cofactor.

It localises to the cytoplasm. The catalysed reaction is N(6)-dimethylallyladenosine(37) in tRNA + (sulfur carrier)-SH + AH2 + 2 S-adenosyl-L-methionine = 2-methylsulfanyl-N(6)-dimethylallyladenosine(37) in tRNA + (sulfur carrier)-H + 5'-deoxyadenosine + L-methionine + A + S-adenosyl-L-homocysteine + 2 H(+). Functionally, catalyzes the methylthiolation of N6-(dimethylallyl)adenosine (i(6)A), leading to the formation of 2-methylthio-N6-(dimethylallyl)adenosine (ms(2)i(6)A) at position 37 in tRNAs that read codons beginning with uridine. In Rickettsia felis (strain ATCC VR-1525 / URRWXCal2) (Rickettsia azadi), this protein is tRNA-2-methylthio-N(6)-dimethylallyladenosine synthase.